The chain runs to 49 residues: uncharacterized protein (49 aa).

The helical transmembrane segment at 5–25 (LTTIFSVVIVLAIFLYFGLLI) threads the bilayer.

This sequence belongs to the plectrovirus ORF12 protein family.

The protein localises to the host membrane. This is an uncharacterized protein from Spiroplasma virus SpV1-R8A2 B (SpV1).